Consider the following 89-residue polypeptide: ATP synthase subunit c (89 aa).

The next 2 membrane-spanning stretches (helical) occupy residues 3-23 (IILG…AIGA) and 53-73 (FILA…ALMF).

The protein belongs to the ATPase C chain family. In terms of assembly, F-type ATPases have 2 components, F(1) - the catalytic core - and F(0) - the membrane proton channel. F(1) has five subunits: alpha(3), beta(3), gamma(1), delta(1), epsilon(1). F(0) has three main subunits: a(1), b(2) and c(10-14). The alpha and beta chains form an alternating ring which encloses part of the gamma chain. F(1) is attached to F(0) by a central stalk formed by the gamma and epsilon chains, while a peripheral stalk is formed by the delta and b chains.

Its subcellular location is the cell inner membrane. F(1)F(0) ATP synthase produces ATP from ADP in the presence of a proton or sodium gradient. F-type ATPases consist of two structural domains, F(1) containing the extramembraneous catalytic core and F(0) containing the membrane proton channel, linked together by a central stalk and a peripheral stalk. During catalysis, ATP synthesis in the catalytic domain of F(1) is coupled via a rotary mechanism of the central stalk subunits to proton translocation. Functionally, key component of the F(0) channel; it plays a direct role in translocation across the membrane. A homomeric c-ring of between 10-14 subunits forms the central stalk rotor element with the F(1) delta and epsilon subunits. The chain is ATP synthase subunit c from Verminephrobacter eiseniae (strain EF01-2).